A 251-amino-acid polypeptide reads, in one-letter code: 16S rRNA (guanine(1405)-N(7))-methyltransferase (251 aa).

Residues tyrosine 56, 81–83 (HAS), arginine 87, alanine 111, aspartate 131, 157–158 (DV), phenylalanine 173, and glutamate 182 contribute to the S-adenosyl-L-methionine site.

Belongs to the methyltransferase superfamily. Aminoglycoside resistance family.

It carries out the reaction guanosine(1405) in 16S rRNA + S-adenosyl-L-methionine = N(7)-methylguanosine(1405) in 16S rRNA + S-adenosyl-L-homocysteine. In terms of biological role, specifically methylates the N(7) position of guanine 1405 in 16S rRNA. Confers resistance to various aminoglycosides, including kanamycin, tobramycin, amikacin, arbekacin, gentamicin, sisomicin and isepamicin. The polypeptide is 16S rRNA (guanine(1405)-N(7))-methyltransferase (rmtB) (Serratia marcescens).